A 106-amino-acid polypeptide reads, in one-letter code: MIIATTDTIAGKEITKTLGMARGSTIQAKHLGKDIMSGLRSVVGGELTEYSKMLEEAREKAINRMVEDAEKMGADAVVNVRFMTSMVMAGAAEILAYGTAVKIMNR.

The protein belongs to the UPF0145 family.

The protein is UPF0145 protein MA_3383 of Methanosarcina acetivorans (strain ATCC 35395 / DSM 2834 / JCM 12185 / C2A).